The sequence spans 312 residues: tRNA-dihydrouridine(16) synthase (312 aa).

Residues 7-9 (PMQ) and Gln68 contribute to the FMN site. Residue Cys98 is the Proton donor of the active site. FMN contacts are provided by residues Lys139, 200-202 (NGE), and 224-225 (GR).

This sequence belongs to the Dus family. DusC subfamily. It depends on FMN as a cofactor.

The enzyme catalyses 5,6-dihydrouridine(16) in tRNA + NADP(+) = uridine(16) in tRNA + NADPH + H(+). It carries out the reaction 5,6-dihydrouridine(16) in tRNA + NAD(+) = uridine(16) in tRNA + NADH + H(+). Functionally, catalyzes the synthesis of 5,6-dihydrouridine (D), a modified base found in the D-loop of most tRNAs, via the reduction of the C5-C6 double bond in target uridines. Specifically modifies U16 in tRNAs. This chain is tRNA-dihydrouridine(16) synthase, found in Pasteurella multocida (strain Pm70).